The chain runs to 178 residues: Relaxin-like protein SQ10 (178 aa).

The first 20 residues, 1 to 20 (MPALLFYLLGFCLLQGQVTG), serve as a signal peptide directing secretion. Disulfide bonds link C34–C165, C46–C178, and C164–C169. The propeptide at 54-150 (ESPSPENPFL…SSASESNTFS (97 aa)) is connecting peptide.

This sequence belongs to the insulin family. As to quaternary structure, heterodimer of a B chain and an A chain linked by two disulfide bonds.

The protein localises to the secreted. This is Relaxin-like protein SQ10 from Oryctolagus cuniculus (Rabbit).